The following is a 183-amino-acid chain: MSRAGLEVLIRRVDPDVPLPAYAQPGDAGADLRTTVERELAPGERAVLPTGVSVALPEGYAAFVHPRSGLAARCGVALVNAPGTIDAGYRGEIKVIVVNLDPRESVRFERFDRIAQLVVQQVERVRFRQVAELPGSARAEGGFGSTGGHAGLDPASGTSGQVAEGGPTGGNRYASVVSDREGQ.

Residues 67–69 (RSG), Asn80, 84–86 (TID), and Lys94 contribute to the substrate site. Residues 138-183 (RAEGGFGSTGGHAGLDPASGTSGQVAEGGPTGGNRYASVVSDREGQ) are disordered. A compositionally biased stretch (gly residues) spans 141–150 (GGFGSTGGHA).

The protein belongs to the dUTPase family. Requires Mg(2+) as cofactor.

The enzyme catalyses dUTP + H2O = dUMP + diphosphate + H(+). It participates in pyrimidine metabolism; dUMP biosynthesis; dUMP from dCTP (dUTP route): step 2/2. Its function is as follows. This enzyme is involved in nucleotide metabolism: it produces dUMP, the immediate precursor of thymidine nucleotides and it decreases the intracellular concentration of dUTP so that uracil cannot be incorporated into DNA. The sequence is that of Deoxyuridine 5'-triphosphate nucleotidohydrolase from Streptomyces coelicolor (strain ATCC BAA-471 / A3(2) / M145).